Here is a 199-residue protein sequence, read N- to C-terminus: Recombination protein RecR (199 aa).

Residues 58–73 form a C4-type zinc finger; the sequence is CSVCGNLTDTDVCPLC. One can recognise a Toprim domain in the interval 81–176; sequence SVICVVEDPR…KTTRIAHGIP (96 aa).

Belongs to the RecR family.

Functionally, may play a role in DNA repair. It seems to be involved in an RecBC-independent recombinational process of DNA repair. It may act with RecF and RecO. The sequence is that of Recombination protein RecR from Acetivibrio thermocellus (strain ATCC 27405 / DSM 1237 / JCM 9322 / NBRC 103400 / NCIMB 10682 / NRRL B-4536 / VPI 7372) (Clostridium thermocellum).